Consider the following 452-residue polypeptide: Chromosomal replication initiator protein DnaA (452 aa).

A domain I, interacts with DnaA modulators region spans residues 1 to 73 (MSPNSTLWQT…NELATKYSST (73 aa)). Positions 73-102 (TPVRLKFVSQEEVIEEPVADRKLTIDYRQG) are domain II. Residues 103–323 (NLNSTYTFDS…GALIRLISYA (221 aa)) are domain III, AAA+ region. 4 residues coordinate ATP: Gly-147, Gly-149, Lys-150, and Thr-151. The segment at 324-452 (QTFNLEITMN…VKKIDSPLLK (129 aa)) is domain IV, binds dsDNA.

It belongs to the DnaA family. Oligomerizes as a right-handed, spiral filament on DNA at oriC.

The protein resides in the cytoplasm. Functionally, plays an essential role in the initiation and regulation of chromosomal replication. ATP-DnaA binds to the origin of replication (oriC) to initiate formation of the DNA replication initiation complex once per cell cycle. Binds the DnaA box (a 9 base pair repeat at the origin) and separates the double-stranded (ds)DNA. Forms a right-handed helical filament on oriC DNA; dsDNA binds to the exterior of the filament while single-stranded (ss)DNA is stabiized in the filament's interior. The ATP-DnaA-oriC complex binds and stabilizes one strand of the AT-rich DNA unwinding element (DUE), permitting loading of DNA polymerase. After initiation quickly degrades to an ADP-DnaA complex that is not apt for DNA replication. Binds acidic phospholipids. In Acholeplasma laidlawii (strain PG-8A), this protein is Chromosomal replication initiator protein DnaA.